The chain runs to 537 residues: MALVHLTALAACGLLLVILRAAFNSWRLQRKLPPGPPGAPLIGNILQLPKVRAHQKFTEWARTYGGLYSFRIGPATAAVVTDRALVKELFDKRSALYSSRPTSYVGQNIITRGDHLLVMDYSDNWRLFRKAINQHFMASMCEKTHVRLLEAEHTQMMRDFLLHPEKHMLHTKRTTNSIIMSLLFGIRTPSWDTPHMQELYEIMEIWSQIMETGATPPVDIFPWLHWVPQQWLGHWVDRSQTVARGMKRLYSSFHRRAIEARRKAESTSQSRARTFLDDVLDLQEKLGLTDNQVDFLGGVMMEGGSDTGSTMLLVMIQALALHPEIQQRARAELDAVCGEHRSPTWEDFPRLPYINMIVKETMRWRPVTPLAFPHALNKDDWVNGYFLPKGTTVFLNVWGLHHDENIFPNPDQFDPSRFEGRHKLAFDYAASPDYMQRDHYIYGAGRRLCPGIHLSERSMFLGAAKLLWAFNFEPARDEDGNPIRIDTDPVTGYTEGFLVCPRPYQCNVTPRSPAHAETILREFSRAESEVLSQYAMP.

The first 21 residues, 1 to 21, serve as a signal peptide directing secretion; the sequence is MALVHLTALAACGLLLVILRA. Cys-449 serves as a coordination point for heme.

The protein belongs to the cytochrome P450 family. The cofactor is heme.

It functions in the pathway secondary metabolite biosynthesis; terpenoid biosynthesis. Its function is as follows. Cytochrome P450 monooxygenase; part of the gene cluster that mediates the biosynthesis of yanuthone D, a fungal isoprenoid epoxycyclohexenone that acts as an antibiotic against fungi and bacteria. The first step of the pathway is the synthesis of 6-methylsalicylic acid (6-MSA) by the polyketide synthase yanA. 6-MSA is then converted to m-cresol by the decarboxylase yanB. The cytochrome P450 monooxygenase yanC then catalyzes the oxidation of m-cresol to toluquinol. Epoxidation of toluquinol is then performed by the short chain dehydrogenase yanD, with the help of yanE, and a further prenylation by yanG leads to 7-deacetoxyyanuthone A. The next step is the hydroxylation of C-22 of 7-deacetoxyyanuthone A by the cytochrome P450 monooxygenase yanH to yield 22-deacetylyanuthone A. O-Mevalon transferase yanI then attaches mevalon to the hydroxyl group of 22-deacetylyanuthone A to produce yanuthone E. Finally, the FAD-dependent monooxygenase yanF oxidizes the hydroxyl group at C15 of yanuthone E to form yanuthone D. Furthermore, several branching points in the pathway lead to the production of yanuthones F and G from 7-deacetoxyyanuthone A; yanuthones H and I from 22-deacetylyanuthone A; and yanuthone J from yanuthone E. YanC is also involved in the synthesis of yanuthone X1 which does not have 6-methylsalicylic acid (6-MSA) as precursor. This chain is Cytochrome P450 monooxygenase yanC, found in Aspergillus niger (strain ATCC 1015 / CBS 113.46 / FGSC A1144 / LSHB Ac4 / NCTC 3858a / NRRL 328 / USDA 3528.7).